The chain runs to 337 residues: UDP-3-O-acylglucosamine N-acyltransferase (337 aa).

Catalysis depends on His-238, which acts as the Proton acceptor.

This sequence belongs to the transferase hexapeptide repeat family. LpxD subfamily. Homotrimer.

It catalyses the reaction a UDP-3-O-[(3R)-3-hydroxyacyl]-alpha-D-glucosamine + a (3R)-hydroxyacyl-[ACP] = a UDP-2-N,3-O-bis[(3R)-3-hydroxyacyl]-alpha-D-glucosamine + holo-[ACP] + H(+). It participates in bacterial outer membrane biogenesis; LPS lipid A biosynthesis. Catalyzes the N-acylation of UDP-3-O-acylglucosamine using 3-hydroxyacyl-ACP as the acyl donor. Is involved in the biosynthesis of lipid A, a phosphorylated glycolipid that anchors the lipopolysaccharide to the outer membrane of the cell. The polypeptide is UDP-3-O-acylglucosamine N-acyltransferase (Xanthomonas euvesicatoria pv. vesicatoria (strain 85-10) (Xanthomonas campestris pv. vesicatoria)).